The primary structure comprises 332 residues: MLVLGVESTAHTISLGLVKDGDVLGQVGKTYVPPSGLGIHPREAADHHSQMAPQLLSHLLYRHGVRLSDVDVVAYAAGPGLGPALRVGAVLARAIAIKLGVPIVPVHHGIAHIEIARYATKSCDPLVVLISGGHTVIAGYSDRRYRIFGETLDVAIGNAIDMFAREAGLGFPGVPAVERCGESADRLVEFPMPIVGQDMSYAGLTTYALKLLKEGVPLSVICKSLVEAAYYMLAEVTERALAFTRKSELVVAGGVARSRRLREILSQVGAYHGAEVKVVPDEYAGDNGAMIALTGYYAYKRGVYTTPEESFVRQRWRLDAVDVPWFWDLCNR.

Residues His-108 and His-112 each coordinate Fe cation. Substrate contacts are provided by residues 129 to 133, Asp-161, Glu-178, and Ser-258; that span reads LISGG. A Fe cation-binding site is contributed by Asp-286.

It belongs to the KAE1 / TsaD family. Fe(2+) serves as cofactor.

It localises to the cytoplasm. It catalyses the reaction L-threonylcarbamoyladenylate + adenosine(37) in tRNA = N(6)-L-threonylcarbamoyladenosine(37) in tRNA + AMP + H(+). Its function is as follows. Required for the formation of a threonylcarbamoyl group on adenosine at position 37 (t(6)A37) in tRNAs that read codons beginning with adenine. Is probably involved in the transfer of the threonylcarbamoyl moiety of threonylcarbamoyl-AMP (TC-AMP) to the N6 group of A37. The chain is tRNA N6-adenosine threonylcarbamoyltransferase from Pyrobaculum arsenaticum (strain DSM 13514 / JCM 11321 / PZ6).